The sequence spans 352 residues: Ion-translocating oxidoreductase complex subunit D (352 aa).

4 helical membrane passes run 20-40, 42-62, 89-109, and 123-143; these read IMLLVLLAAVPGIAAQLWFFG, GTLVQILLASVSALLAEALVL, IPPLAPWWMVVLGTVFAVIIA, and PAMIGYVVLLISFPVQMTSWL. Threonine 187 carries the post-translational modification FMN phosphoryl threonine. A run of 5 helical transmembrane segments spans residues 214–234, 242–262, 267–287, 301–321, and 322–342; these read ILAGAGWQWVNLAWLAGGVWL, WHIPLSFLVTLALCATLGWLF, LASPQIHLLSGATMLGAFFIL, LIFGALAGLLVWLIRSFGGYP, and DGVAFAVLLANITVPLIDYYT.

The protein belongs to the NqrB/RnfD family. The complex is composed of six subunits: RsxA, RsxB, RsxC, RsxD, RsxE and RsxG. It depends on FMN as a cofactor.

It localises to the cell inner membrane. Part of a membrane-bound complex that couples electron transfer with translocation of ions across the membrane. Required to maintain the reduced state of SoxR. This is Ion-translocating oxidoreductase complex subunit D from Escherichia coli O17:K52:H18 (strain UMN026 / ExPEC).